The following is a 356-amino-acid chain: Protein MGF 360-10L (356 aa).

Residues 57 to 89 (DLNTALMLATKENNYQLIKMFTDWGADINYGLI) form an ANK repeat. N-linked (GlcNAc...) asparagine; by host glycosylation occurs at asparagine 172. A helical transmembrane segment spans residues 249–271 (NFLTIYYCFILGANINLAMIASI). N-linked (GlcNAc...) asparagine; by host glycosylation is found at asparagine 352 and asparagine 353.

The protein belongs to the asfivirus MGF 360 family.

Its subcellular location is the host membrane. Its function is as follows. Plays a role in virus cell tropism, and may be required for efficient virus replication in macrophages. The sequence is that of Protein MGF 360-10L from African swine fever virus (isolate Tick/South Africa/Pretoriuskop Pr4/1996) (ASFV).